Reading from the N-terminus, the 507-residue chain is Dolichyl pyrophosphate Man9GlcNAc2 alpha-1,3-glucosyltransferase (507 aa).

At 1 to 3 (MEK) the chain is on the cytoplasmic side. A helical membrane pass occupies residues 4 to 24 (WSLMTITVLLALTVRWTVSLG). At 25–114 (SYSGAGKPPM…SQSHKLFMRT (90 aa)) the chain is on the lumenal side. Asparagine 59 carries N-linked (GlcNAc...) asparagine glycosylation. A helical transmembrane segment spans residues 115-135 (TVFVADLLIYIPAVILYCCSL). Residues 136–143 (KETSTKKK) lie on the Cytoplasmic side of the membrane. Residues 144–164 (VSSALCILLYPGLILIDHGHF) form a helical membrane-spanning segment. At 165–168 (QYNS) the chain is on the lumenal side. Residues 169–189 (VSLGFALWGVLCLSYDWDLLG) traverse the membrane as a helical segment. The Cytoplasmic portion of the chain corresponds to 190 to 226 (SAAFCLALNYKQMELYHSLPFFCYLLGKCFKKGLKGK). A helical transmembrane segment spans residues 227–247 (GLLLLIKLAGTVVASFAVCWL). Residues 248–297 (PFCTDVEQIMQVLRRLFPIDRGLFEDKVANIWCSLSVLIKIKNVVSPQTQ) lie on the Lumenal side of the membrane. The chain crosses the membrane as a helical span at residues 298-318 (LKLSFAVTFLSLLPTCIKLTV). Over 319 to 338 (QPSLRGFKLTLVSCALSFFL) the chain is Cytoplasmic. Residues 339–359 (FSFQVHEKSILLVSVPVCLII) form a helical membrane-spanning segment. Residues 360–361 (NE) lie on the Lumenal side of the membrane. The helical transmembrane segment at 362–382 (VPFMATWFLLVSTFSMLPLLL) threads the bilayer. The Cytoplasmic segment spans residues 383-387 (KDGLL). The helical transmembrane segment at 388-408 (LPYAVTTLAFLSACVASFAIF) threads the bilayer. Over 409–441 (EKTSAKDLQLKPFSQSLRGYVSWFKLFPKIVRS) the chain is Lumenal. The helical transmembrane segment at 442–462 (LFLLSVTLMGVLSVMSAAVHP) threads the bilayer. The Cytoplasmic portion of the chain corresponds to 463–473 (PQRFPDLFPVS). The chain crosses the membrane as a helical span at residues 474–494 (VSSISCLHFLFFLVYFNVIIL). Residues 495-507 (WDSKNSRNQKKVS) lie on the Lumenal side of the membrane.

The protein belongs to the ALG6/ALG8 glucosyltransferase family.

It localises to the endoplasmic reticulum membrane. The catalysed reaction is an alpha-D-Man-(1-&gt;2)-alpha-D-Man-(1-&gt;2)-alpha-D-Man-(1-&gt;3)-[alpha-D-Man-(1-&gt;2)-alpha-D-Man-(1-&gt;3)-[alpha-D-Man-(1-&gt;2)-alpha-D-Man-(1-&gt;6)]-alpha-D-Man-(1-&gt;6)]-beta-D-Man-(1-&gt;4)-beta-D-GlcNAc-(1-&gt;4)-alpha-D-GlcNAc-diphospho-di-trans,poly-cis-dolichol + a di-trans,poly-cis-dolichyl beta-D-glucosyl phosphate = an alpha-D-Glc-(1-&gt;3)-alpha-D-Man-(1-&gt;2)-alpha-D-Man-(1-&gt;2)-alpha-D-Man-(1-&gt;3)-[alpha-D-Man-(1-&gt;2)-alpha-D-Man-(1-&gt;3)-[alpha-D-Man-(1-&gt;2)-alpha-D-Man-(1-&gt;6)]-alpha-D-Man-(1-&gt;6)]-beta-D-Man-(1-&gt;4)-beta-D-GlcNAc-(1-&gt;4)-alpha-D-GlcNAc-diphospho-di-trans,poly-cis-dolichol + a di-trans,poly-cis-dolichyl phosphate + H(+). It functions in the pathway protein modification; protein glycosylation. Its function is as follows. Dolichyl pyrophosphate Man9GlcNAc2 alpha-1,3-glucosyltransferase that operates in the biosynthetic pathway of dolichol-linked oligosaccharides, the glycan precursors employed in protein asparagine (N)-glycosylation. The assembly of dolichol-linked oligosaccharides begins on the cytosolic side of the endoplasmic reticulum membrane and finishes in its lumen. The sequential addition of sugars to dolichol pyrophosphate produces dolichol-linked oligosaccharides containing fourteen sugars, including two GlcNAcs, nine mannoses and three glucoses. Once assembled, the oligosaccharide is transferred from the lipid to nascent proteins by oligosaccharyltransferases. In the lumen of the endoplasmic reticulum, adds the first glucose residue from dolichyl phosphate glucose (Dol-P-Glc) onto the lipid-linked oligosaccharide intermediate Man(9)GlcNAc(2)-PP-Dol to produce Glc(1)Man(9)GlcNAc(2)-PP-Dol. Glc(1)Man(9)GlcNAc(2)-PP-Dol is a substrate for ALG8, the following enzyme in the biosynthetic pathway. The chain is Dolichyl pyrophosphate Man9GlcNAc2 alpha-1,3-glucosyltransferase from Gallus gallus (Chicken).